Reading from the N-terminus, the 242-residue chain is Transcription factor Spi-C (242 aa).

The segment at residues 112–195 (LRLFEYLFES…IRRKLTYQFS (84 aa)) is a DNA-binding region (ETS).

It belongs to the ETS family. As to quaternary structure, binds DNA as a monomer. In terms of tissue distribution, expressed in lymphoid tissues, including spleen, bone marrow and thymus. According to PubMed:19037245, highly expressed in red pulp macrophages and, at lower, levels in B-cells, but not in other cells, including, monocytes, dendritic cells and other tissue macrophages. According to PubMed:10464163 expressed in pre- and mature B-cells but not in immature B-cells; according to PubMed:10187812 not expressed in pre- but predominantly in mature B-cells and at lower levels in macrophages.

The protein resides in the nucleus. Functionally, controls the development of red pulp macrophages required for red blood cells recycling and iron homeostasis. Transcription factor that binds to the PU-box, a purine-rich DNA sequence (5'-GAGGA[AT]-3') that can act as a lymphoid-specific enhancer. Regulates VCAM1 gene expression. The protein is Transcription factor Spi-C (Spic) of Mus musculus (Mouse).